The following is an 825-amino-acid chain: Phenylalanine--tRNA ligase beta subunit (825 aa).

The tRNA-binding domain occupies 39–154 (RTWADGVVLG…EAHPLGSDVR (116 aa)). Residues 411–506 (PLERTLKLRL…RLYGYDRFSE (96 aa)) enclose the B5 domain. 4 residues coordinate Mg(2+): Asp-484, Asp-490, Glu-493, and Glu-494. In terms of domain architecture, FDX-ACB spans 731–824 (SPFPAADRDI…LATQFPVTLR (94 aa)).

The protein belongs to the phenylalanyl-tRNA synthetase beta subunit family. Type 1 subfamily. Tetramer of two alpha and two beta subunits. Mg(2+) is required as a cofactor.

The protein localises to the cytoplasm. It carries out the reaction tRNA(Phe) + L-phenylalanine + ATP = L-phenylalanyl-tRNA(Phe) + AMP + diphosphate + H(+). This chain is Phenylalanine--tRNA ligase beta subunit, found in Synechococcus sp. (strain JA-2-3B'a(2-13)) (Cyanobacteria bacterium Yellowstone B-Prime).